A 189-amino-acid chain; its full sequence is Translation initiation factor IF-3 (189 aa).

Belongs to the IF-3 family. As to quaternary structure, monomer.

The protein resides in the cytoplasm. IF-3 binds to the 30S ribosomal subunit and shifts the equilibrium between 70S ribosomes and their 50S and 30S subunits in favor of the free subunits, thus enhancing the availability of 30S subunits on which protein synthesis initiation begins. This Corynebacterium glutamicum (strain R) protein is Translation initiation factor IF-3.